We begin with the raw amino-acid sequence, 150 residues long: Large ribosomal subunit protein bL9 (150 aa).

It belongs to the bacterial ribosomal protein bL9 family.

Binds to the 23S rRNA. The polypeptide is Large ribosomal subunit protein bL9 (Corynebacterium aurimucosum (strain ATCC 700975 / DSM 44827 / CIP 107346 / CN-1) (Corynebacterium nigricans)).